The primary structure comprises 208 residues: Small ribosomal subunit protein uS4 (208 aa).

Positions 98-161 constitute an S4 RNA-binding domain; that stretch reads RRLDNVIYRL…RKMPVIAEAQ (64 aa).

This sequence belongs to the universal ribosomal protein uS4 family. Part of the 30S ribosomal subunit. Contacts protein S5. The interaction surface between S4 and S5 is involved in control of translational fidelity.

One of the primary rRNA binding proteins, it binds directly to 16S rRNA where it nucleates assembly of the body of the 30S subunit. Functionally, with S5 and S12 plays an important role in translational accuracy. The polypeptide is Small ribosomal subunit protein uS4 (Oleidesulfovibrio alaskensis (strain ATCC BAA-1058 / DSM 17464 / G20) (Desulfovibrio alaskensis)).